The primary structure comprises 345 residues: Tetraacyldisaccharide 4'-kinase (345 aa).

61 to 68 is an ATP binding site; it reads TAGGTGKT.

The protein belongs to the LpxK family.

The enzyme catalyses a lipid A disaccharide + ATP = a lipid IVA + ADP + H(+). Its pathway is glycolipid biosynthesis; lipid IV(A) biosynthesis; lipid IV(A) from (3R)-3-hydroxytetradecanoyl-[acyl-carrier-protein] and UDP-N-acetyl-alpha-D-glucosamine: step 6/6. In terms of biological role, transfers the gamma-phosphate of ATP to the 4'-position of a tetraacyldisaccharide 1-phosphate intermediate (termed DS-1-P) to form tetraacyldisaccharide 1,4'-bis-phosphate (lipid IVA). The chain is Tetraacyldisaccharide 4'-kinase from Xanthomonas euvesicatoria pv. vesicatoria (strain 85-10) (Xanthomonas campestris pv. vesicatoria).